Reading from the N-terminus, the 576-residue chain is Putative export ATP-binding/permease protein RP696 (576 aa).

The 284-residue stretch at 20-303 (LIIVMISLLS…IFELLSEMHL (284 aa)) folds into the ABC transmembrane type-1 domain. The next 6 helical transmembrane spans lie at 21 to 41 (IIVM…GSIF), 61 to 81 (ILYI…RSYF), 135 to 155 (FLSF…LMFF), 158 to 178 (FKLA…LIKF), 242 to 262 (ALFF…IVWI), and 277 to 297 (IISF…IFEL). In terms of domain architecture, ABC transporter spans 336-572 (IEFKNVDFTY…SEIYRNICRE (237 aa)). 371-378 (GRSGAGKS) contributes to the ATP binding site.

Belongs to the ABC transporter superfamily. As to quaternary structure, homodimer.

It is found in the cell inner membrane. Part of an ABC transporter complex. Transmembrane domains (TMD) form a pore in the inner membrane and the ATP-binding domain (NBD) is responsible for energy generation. This chain is Putative export ATP-binding/permease protein RP696, found in Rickettsia prowazekii (strain Madrid E).